The chain runs to 170 residues: Cilia- and flagella-associated protein 276 (170 aa).

2 disordered regions span residues 1 to 37 (MPLTRDPFQNPALDKDDSYLGKSRASKKLPYKNPTHL) and 151 to 170 (HTAATNGGYSRKNDGGFFST).

In terms of assembly, microtubule inner protein component of sperm flagellar doublet microtubules. As to expression, expressed in trachea multiciliated cells.

The protein resides in the cytoplasm. The protein localises to the cytoskeleton. It localises to the cilium axoneme. It is found in the flagellum axoneme. Microtubule inner protein (MIP) part of the dynein-decorated doublet microtubules (DMTs) in cilia axoneme, which is required for motile cilia beating. May play an important role for the maintenance of myelin-axon integrity. May affect intracellular Ca(2+) homeostasis. The sequence is that of Cilia- and flagella-associated protein 276 from Bos taurus (Bovine).